A 516-amino-acid polypeptide reads, in one-letter code: uncharacterized protein (516 aa).

Ser-21 carries the post-translational modification Phosphoserine. Positions 46-74 are disordered; that stretch reads DLQSSMEDSNKANGNGEETTDGAEGVLQT. Residues 47-62 are compositionally biased toward polar residues; that stretch reads LQSSMEDSNKANGNGE. WD repeat units follow at residues 182–227, 252–292, 295–335, 337–377, 381–421, and 426–468; these read TFPL…AVYP, YHTD…CVKS, YHSD…APSS, QVTS…KSVW, AHDG…PKMV, and LDVG…GVRK. The segment covering 482–493 has biased composition (basic and acidic residues); it reads ERIVQLEDRGAG. Residues 482-516 are disordered; sequence ERIVQLEDRGAGEDSSDDDDYEDIEDDDDQDAEMS. Residues 495-516 show a composition bias toward acidic residues; the sequence is DSSDDDDYEDIEDDDDQDAEMS. A phosphoserine mark is found at Ser-496 and Ser-497.

It localises to the cytoplasm. The protein resides in the nucleus. It is found in the nucleolus. This is an uncharacterized protein from Schizosaccharomyces pombe (strain 972 / ATCC 24843) (Fission yeast).